Here is a 190-residue protein sequence, read N- to C-terminus: Elongation factor P 2 (190 aa).

The protein belongs to the elongation factor P family.

The protein resides in the cytoplasm. The protein operates within protein biosynthesis; polypeptide chain elongation. In terms of biological role, involved in peptide bond synthesis. Stimulates efficient translation and peptide-bond synthesis on native or reconstituted 70S ribosomes in vitro. Probably functions indirectly by altering the affinity of the ribosome for aminoacyl-tRNA, thus increasing their reactivity as acceptors for peptidyl transferase. The protein is Elongation factor P 2 (efp2) of Chlamydia pneumoniae (Chlamydophila pneumoniae).